The chain runs to 308 residues: ABC transporter protein AbcA (308 aa).

The 240-residue stretch at 6 to 245 (LAVSGVNKSF…YHKLLHMEGD (240 aa)) folds into the ABC transporter domain. Position 58–65 (58–65 (GHNGAGKS)) interacts with ATP.

The protein belongs to the ABC transporter superfamily.

Influences the expression of the surface array protein gene (vapA). May have both regulatory and transport activities. The chain is ABC transporter protein AbcA (abcA) from Aeromonas salmonicida.